Here is a 94-residue protein sequence, read N- to C-terminus: Immune protein Tsi6 (94 aa).

Its function is as follows. Immunity protein that plays a role in preventing early activation of toxin Tse6. In Pseudomonas aeruginosa (strain ATCC 15692 / DSM 22644 / CIP 104116 / JCM 14847 / LMG 12228 / 1C / PRS 101 / PAO1), this protein is Immune protein Tsi6.